Here is a 1938-residue protein sequence, read N- to C-terminus: MTDAQMADFGAAAQYLRKSEKERLEAQTRPFDIRTECFVPDDKEEYVKAKVVSREGGKVTAETENGKTVTIKEDQVMQQNPPKFDKIEDMAMLTFLHEPAVLYNLKERYAAWMIYTYSGLFCVTVNPYKWLPVYNAEVVAAYRGKKRSEAPPHIFSISDNAYQYMLTDRENQSILITGESGAGKTVNTKRVIQYFASIAAIGDRSKKENPNANKGTLEDQIIQANPALEAFGNAKTVRNDNSSRFGKFIRIHFGATGKLASADIETYLLEKSRVIFQLKAERNYHIFYQILSNKKPELLDMLLVTNNPYDYAFVSQGEVSVASIDDSEELLATDSAFDVLSFTAEEKAGVYKLTGAIMHYGNMKFKQKQREEQAEPDGTEDADKSAYLMGLNSADLLKGLCHPRVKVGNEYVTKGQSVQQVYYSIGALAKSVYEKMFNWMVTRINATLETKQPRQYFIGVLDIAGFEIFDFNSFEQLCINFTNEKLQQFFNHHMFVLEQEEYKKEGIEWEFIDFGMDLQACIDLIEKPMGIMSILEEECMFPKASDMTFKAKLYDNHLGKSNNFQKPRNVKGKQEAHFSLVHYAGTVDYNIMGWLEKNKDPLNETVVGLYQKSSLKLMATLFSTYASADTGDSGKGKGGKKKGSSFQTVSALHRENLNKLMTNLKTTHPHFVRCIIPNERKAPGVMDNPLVMHQLRCNGVLEGIRICRKGFPNRILYGDFRQRYRILNPAAIPEGQFIDSRKGAEKLLGSLDIDHNQYKFGHTKVFFKAGLLGLLEEMRDERLSRIITRIQAQARGQLMRIEFKKIVERRDALLVIQWNIRAFMGVKNWPWMKLYFKIKPLLKSAETEKEMANMKEEFGRVKDALEKSEARRKELEEKMVSLLQEKNDLQLQVQAEQDNLNDAEERCDQLIKNKIQLEAKVKEMTERLEDEEEMNAELTAKKRKLEDECSELKKDIDDLELTLAKVEKEKHATENKVKNLTEEMAGLDEIIAKLTKEKKALQEAHQQALDDLQAEEDKVNTLTKSKVKLEQQVDDLEGSLEQEKKVRMDLERAKRKLEGDLKLTQESIMDLENDKLQLEEKLKKKEFDISQQNSKIEDEQALALQLQKKLKENQARIEELEEELEAERTARAKVEKLRSDLSRELEEISERLEEAGGATSVQIEMNKKREAEFQKMRRDLEEATLQHEATAAALRKKHADSVAELGEQIDNLQRVKQKLEKEKSEFKLELDDVTSNMEQIIKAKANLEKVSRTLEDQANEYRVKLEEAQRSLNDFTTQRAKLQTENGELARQLEEKEALISQLTRGKLSYTQQMEDLKRQLEEEGKAKNALAHALQSSRHDCDLLREQYEEEMEAKAELQRVLSKANSEVAQWRTKYETDAIQRTEELEEAKKKLAQRLQDAEEAVEAVNAKCSSLEKTKHRLQNEIEDLMVDVERSNAAAAALDKKQRNFDKILAEWKQKYEESQSELESSQKEARSLSTELFKLKNAYEESLEHLETFKRENKNLQEEISDLTEQLGEGGKNVHELEKIRKQLEVEKLELQSALEEAEASLEHEEGKILRAQLEFNQIKAEIERKLAEKDEEMEQAKRNHLRMVDSLQTSLDAETRSRNEALRVKKKMEGDLNEMEIQLSQANRIASEAQKHLKNSQAHLKDTQLQLDDAVHANDDLKENIAIVERRNNLLQAELEELRAVVEQTERSRKLAEQELIETSERVQLLHSQNTSLINQKKKMESDLTQLQTEVEEAVQECRNAEEKAKKAITDAAMMAEELKKEQDTSAHLERMKKNMEQTIKDLQHRLDEAEQIALKGGKKQLQKLEARVRELENELEAEQKRNAESVKGMRKSERRIKELTYQTEEDKKNLMRLQDLVDKLQLKVKAYKRQAEEAEEQANTNLSKFRKVQHELDEAEERADIAESQVNKLRAKSRDIGAKKMHDEE.

The 50-residue stretch at 32–81 (DIRTECFVPDDKEEYVKAKVVSREGGKVTAETENGKTVTIKEDQVMQQNP) folds into the Myosin N-terminal SH3-like domain. One can recognise a Myosin motor domain in the interval 85 to 780 (DKIEDMAMLT…LLGLLEEMRD (696 aa)). Position 129 is an N6,N6,N6-trimethyllysine (K129). ATP is bound at residue 178 to 185 (GESGAGKT). T379 bears the Phosphothreonine mark. S417 bears the Phosphoserine mark. Actin-binding stretches follow at residues 657–679 (LNKLMTNLKTTHPHFVRCIIPNE) and 759–773 (KFGHTKVFFKAGLLG). An IQ domain is found at 783 to 812 (LSRIITRIQAQARGQLMRIEFKKIVERRDA). Calmodulin-binding regions lie at residues 790–807 (IQAQARGQLMRIEFKKIV) and 816–833 (IQWNIRAFMGVKNWPWMK). A coiled-coil region spans residues 842–1938 (LKSAETEKEM…IGAKKMHDEE (1097 aa)). A phosphoserine mark is found at S1090 and S1139. At Y1261 the chain carries Phosphotyrosine. S1271 carries the post-translational modification Phosphoserine. T1277 and T1284 each carry phosphothreonine. At S1309 the chain carries Phosphoserine. Y1310 is modified (phosphotyrosine). T1311 bears the Phosphothreonine mark. S1512 bears the Phosphoserine mark. The residue at position 1515 (T1515) is a Phosphothreonine. A disordered region spans residues 1909 to 1938 (EERADIAESQVNKLRAKSRDIGAKKMHDEE). Basic and acidic residues predominate over residues 1925-1938 (KSRDIGAKKMHDEE).

Belongs to the TRAFAC class myosin-kinesin ATPase superfamily. Myosin family. Muscle myosin is a hexameric protein that consists of 2 heavy chain subunits (MHC), 2 alkali light chain subunits (MLC) and 2 regulatory light chain subunits (MLC-2).

It is found in the cytoplasm. Its subcellular location is the myofibril. Functionally, muscle contraction. In Mus musculus (Mouse), this protein is Myosin-6 (Myh6).